The primary structure comprises 272 residues: NADH-cytochrome b5 reductase 3 (272 aa).

Positions 11–123 (DIKYPLRLID…RGPNGLLVYQ (113 aa)) constitute an FAD-binding FR-type domain. Residue Lys-13 is modified to N6-acetyllysine. A Phosphotyrosine modification is found at Tyr-14. Lys-21 carries the N6-acetyllysine modification. 6 residues coordinate FAD: Arg-63, Pro-64, Tyr-65, Val-80, Lys-82, and Tyr-84. Position 91 is an N6-acetyllysine (Lys-91). Residues Lys-97, Met-98, Ser-99, and Thr-156 each coordinate FAD.

It belongs to the flavoprotein pyridine nucleotide cytochrome reductase family. In terms of assembly, component of a complex composed of cytochrome b5, NADH-cytochrome b5 reductase (CYB5R3) and MTARC2. Interacts with MTLN; the interaction is required to maintain cellular lipid composition and leads to stimulation of mitochondrial respiratory complex I activity. It depends on FAD as a cofactor.

It is found in the endoplasmic reticulum membrane. It localises to the mitochondrion outer membrane. It catalyses the reaction 2 Fe(III)-[cytochrome b5] + NADH = 2 Fe(II)-[cytochrome b5] + NAD(+) + H(+). Functionally, catalyzes the reduction of two molecules of cytochrome b5 using NADH as the electron donor. The protein is NADH-cytochrome b5 reductase 3 (CYB5R3) of Sus scrofa (Pig).